Consider the following 127-residue polypeptide: Large ribosomal subunit protein uL22 (127 aa).

It belongs to the universal ribosomal protein uL22 family. As to quaternary structure, part of the 50S ribosomal subunit.

This protein binds specifically to 23S rRNA; its binding is stimulated by other ribosomal proteins, e.g. L4, L17, and L20. It is important during the early stages of 50S assembly. It makes multiple contacts with different domains of the 23S rRNA in the assembled 50S subunit and ribosome. In terms of biological role, the globular domain of the protein is located near the polypeptide exit tunnel on the outside of the subunit, while an extended beta-hairpin is found that lines the wall of the exit tunnel in the center of the 70S ribosome. The protein is Large ribosomal subunit protein uL22 of Methylorubrum extorquens (strain CM4 / NCIMB 13688) (Methylobacterium extorquens).